The primary structure comprises 365 residues: Regulatory protein RapG (365 aa).

5 TPR repeats span residues Gly135–Leu168, Ala169–Leu202, Ala209–Ala242, Ser244–Arg284, and Arg326–Ile359.

Belongs to the Rap family.

Its subcellular location is the cytoplasm. Inhibited by PhrG. Functionally, involved in the regulation of expression of DegU-controlled genes. Inhibits the binding of DegU to the promoter regions of aprE, coding for an extracellular alkaline protease, and comK, a master regulator for development of genetic competence. RapG does not stimulate dephosphorylation of DegU-P. This is Regulatory protein RapG (rapG) from Bacillus subtilis (strain 168).